The sequence spans 343 residues: Sorbitol dehydrogenase (343 aa).

Residues 1-26 form a disordered region; sequence MKALVKTQHGTGHFAVQEKPEPTPGK. Residues Cys39, His60, and Glu61 each contribute to the Zn(2+) site. Substrate is bound at residue Glu146. Residues Ile174, Arg200, and 262 to 264 each bind NAD(+); that span reads VGL.

The protein belongs to the zinc-containing alcohol dehydrogenase family. As to quaternary structure, homotetramer. Zn(2+) is required as a cofactor.

The enzyme catalyses keto-D-fructose + NADH + H(+) = D-sorbitol + NAD(+). It carries out the reaction xylitol + NAD(+) = D-xylulose + NADH + H(+). It catalyses the reaction L-iditol + NAD(+) = keto-L-sorbose + NADH + H(+). Its function is as follows. Polyol dehydrogenase that catalyzes the NAD(+)-dependent oxidation of various sugar alcohols. Is active with D-sorbitol (D-glucitol), xylitol and L-iditol as substrates, leading to the C2-oxidized products D-fructose, D-xylulose and L-sorbose, respectively. This chain is Sorbitol dehydrogenase (gutB), found in Halalkalibacterium halodurans (strain ATCC BAA-125 / DSM 18197 / FERM 7344 / JCM 9153 / C-125) (Bacillus halodurans).